Here is a 212-residue protein sequence, read N- to C-terminus: Small ribosomal subunit protein uS5 (212 aa).

An S5 DRBM domain is found at 48-111 (LEDEVLDINM…DIAKLNIIDV (64 aa)).

It belongs to the universal ribosomal protein uS5 family. In terms of assembly, part of the 30S ribosomal subunit. Contacts protein S4.

Functionally, with S4 and S12 plays an important role in translational accuracy. The polypeptide is Small ribosomal subunit protein uS5 (Haloarcula marismortui (strain ATCC 43049 / DSM 3752 / JCM 8966 / VKM B-1809) (Halobacterium marismortui)).